We begin with the raw amino-acid sequence, 222 residues long: Small ribosomal subunit protein uS3 (222 aa).

In terms of domain architecture, KH type-2 spans 39-108; sequence IRRHIKEKLY…TISLDIKEIK (70 aa).

This sequence belongs to the universal ribosomal protein uS3 family. Part of the 30S ribosomal subunit. Forms a tight complex with proteins S10 and S14.

Binds the lower part of the 30S subunit head. Binds mRNA in the 70S ribosome, positioning it for translation. This is Small ribosomal subunit protein uS3 from Caldicellulosiruptor bescii (strain ATCC BAA-1888 / DSM 6725 / KCTC 15123 / Z-1320) (Anaerocellum thermophilum).